The following is a 212-amino-acid chain: External core antigen (212 aa).

Positions 1–19 (MQLFHLCLIISCSCPTVQA) are cleaved as a signal peptide. The interval 25 to 27 (GWL) is HBEAG. The segment at 165–212 (NAPILSTLPETTVVRRRGRSPRRRTPSPRRRRSQSPRRRRSQSPASQC) is disordered. Positions 178 to 205 (VRRRGRSPRRRTPSPRRRRSQSPRRRRS) are enriched in basic residues. One copy of the 1; half-length repeat lies at 184–190 (SPRRRTP). The interval 184 to 206 (SPRRRTPSPRRRRSQSPRRRRSQ) is 3 X 8 AA repeats of S-P-R-R-R-R-S-Q. The propeptide occupies 184 to 212 (SPRRRTPSPRRRRSQSPRRRRSQSPASQC). 2 repeat units span residues 191–198 (SPRRRRSQ) and 199–206 (SPRRRRSQ).

It belongs to the orthohepadnavirus precore antigen family. In terms of assembly, homodimerizes. Phosphorylated. Post-translationally, cleaved by host furin.

The protein localises to the secreted. The protein resides in the host nucleus. May regulate immune response to the intracellular capsid in acting as a T-cell tolerogen, by having an immunoregulatory effect which prevents destruction of infected cells by cytotoxic T-cells. This immune regulation may predispose to chronicity during perinatal infections and prevent severe liver injury during adult infections. This Hepatitis B virus genotype F2 subtype adw4q (isolate Senegal/9203) (HBV-F) protein is External core antigen.